A 1068-amino-acid polypeptide reads, in one-letter code: Leucine zipper protein 1 (1068 aa).

An N-acetylalanine modification is found at Ala-2. Positions 11 to 354 form a coiled coil; sequence ASNRHLRFKL…KLQVRKQKEL (344 aa). Disordered stretches follow at residues 251–292, 375–402, and 432–558; these read LSSK…VKDL, TKLK…KRER, and AAKA…QAVE. Over residues 254–292 the composition is skewed to basic and acidic residues; sequence KESKRKGSLDYLKQVENETRDKSENEKNRNQEDNKVKDL. A phosphoserine mark is found at Ser-256, Ser-261, Ser-395, Ser-513, Ser-571, Ser-575, Ser-612, and Ser-660. Positions 510–519 are enriched in polar residues; the sequence is RTFSDSTHVS. Residues 677-700 form a disordered region; that stretch reads TTITPEPEPKPQPNSREKVKSRGG. The residue at position 680 (Thr-680) is a Phosphothreonine. Ser-691 and Ser-746 each carry phosphoserine. The segment at 782-829 is disordered; it reads QKSTSKSVTSKVTSSITIYPSDSSGPRAVPSEAPRERHTSTSNIQVGP. Over residues 785–796 the composition is skewed to low complexity; sequence TSKSVTSKVTSS. The required for interaction with FLNA stretch occupies residues 834–884; that stretch reads AISNHVSSPLELSIHKHDITLQLTEAERVGDGSPKNRAEMVVSRSSILIKP. Ser-906 is subject to Phosphoserine. The segment at 924–945 is disordered; sequence RDLKCSEDPPTGIGRNMEATNA. Thr-952 carries the phosphothreonine modification. Disordered stretches follow at residues 959–995 and 1033–1068; these read QPRS…ASEV and NPLE…AEED. The segment covering 984–994 has biased composition (polar residues); it reads RRTQSSLTASE. Position 988 is a phosphoserine (Ser-988).

In terms of assembly, component of the CERF-1 ISWI chromatin remodeling complex (also called the CECR2-containing remodeling factor (CERF) complex) at least composed of CECR2 and SMARCA1. Component of the CERF-5 ISWI chromatin remodeling complex at least composed of CECR2 and SMARCA5/SNF2H. LUZP1 is detected as part of the CERF-1 and CERF-5 complexes in embryonic stem (ES) cells where it is involved in complex stabilization but is not detected in the complexes in the testis. Interacts (via C-terminus) with LIMA1/EPLIN; both proteins restrict ciliation and may work together to regulate this process. Interacts with myosin light chain MYL9; the interaction results in inhibition of phosphorylation of MYL9 by DAPK3. Interacts with DAPK3; the interaction is likely to occur throughout the cell cycle and reduces the LUZP1-mediated suppression of MYL9 phosphorylation. Interacts with the chromosomal passenger complex (CPC); CPC kinase activity is required for localization of LUZP1 to the centromere. Predominantly expressed in the brain (at protein level).

It localises to the cytoplasm. It is found in the cytoskeleton. Its subcellular location is the microtubule organizing center. The protein resides in the centrosome. The protein localises to the cilium basal body. It localises to the midbody. It is found in the chromosome. Its subcellular location is the centromere. The protein resides in the spindle. The protein localises to the stress fiber. It localises to the nucleus. It is found in the cell projection. Its subcellular location is the dendrite. The protein resides in the perikaryon. The protein localises to the cell junction. It localises to the tight junction. F-actin cross-linking protein. Stabilizes actin and acts as a negative regulator of primary cilium formation. Positively regulates the phosphorylation of both myosin II and protein phosphatase 1 regulatory subunit PPP1R12A/MYPT1 and promotes the assembly of myosin II stacks within actin stress fibers. Inhibits the phosphorylation of myosin light chain MYL9 by DAPK3 and suppresses the constriction velocity of the contractile ring during cytokinesis. Binds to microtubules and promotes epithelial cell apical constriction by up-regulating levels of diphosphorylated myosin light chain (MLC) through microtubule-dependent inhibition of MLC dephosphorylation by myosin phosphatase. Involved in regulation of cell migration, nuclear size and centriole number, probably through regulation of the actin cytoskeleton. Component of the CERF-1 and CERF-5 chromatin remodeling complexes in embryonic stem cells where it acts to stabilize the complexes. Plays a role in embryonic brain and cardiovascular development. The chain is Leucine zipper protein 1 (Luzp1) from Mus musculus (Mouse).